Reading from the N-terminus, the 61-residue chain is LECYQMSKVVTCKPEETFCYSDVFMPFRNHIVYTSGCSSYCRDGTGEKCCTTDRCNGARGG.

Cystine bridges form between C3–C19, C12–C37, C41–C49, and C50–C55.

This sequence belongs to the three-finger toxin family. Short-chain subfamily. Orphan group XX sub-subfamily. Expressed by the venom gland.

Its subcellular location is the secreted. The sequence is that of Weak toxin CM-2a from Naja annulifera (Banded Egyptian cobra).